We begin with the raw amino-acid sequence, 145 residues long: Large-conductance mechanosensitive channel (145 aa).

3 helical membrane-spanning segments follow: residues 14–34 (VMDL…VKSL), 38–58 (LIMP…YFLP), and 81–101 (GSFL…FLMV).

This sequence belongs to the MscL family. As to quaternary structure, homopentamer.

It localises to the cell inner membrane. Its function is as follows. Channel that opens in response to stretch forces in the membrane lipid bilayer. May participate in the regulation of osmotic pressure changes within the cell. This Rhizobium leguminosarum bv. trifolii (strain WSM2304) protein is Large-conductance mechanosensitive channel.